The chain runs to 449 residues: Na(+)/H(+) antiporter NhaA 2 (449 aa).

Helical transmembrane passes span 32 to 52 (IEAT…TLSN), 87 to 107 (GLMT…VVLG), 114 to 134 (MVAL…GLYL), 145 to 165 (GWGV…ALLG), 174 to 194 (VFLL…VAVG), 202 to 222 (TALA…LLGV), 233 to 253 (AIIW…GVIL), 318 to 338 (WVAF…PITI), 347 to 367 (LAVM…FAWL), 382 to 402 (WGGL…ALFI), and 417 to 437 (LGIL…LCAL).

Belongs to the NhaA Na(+)/H(+) (TC 2.A.33) antiporter family.

It localises to the cell inner membrane. It carries out the reaction Na(+)(in) + 2 H(+)(out) = Na(+)(out) + 2 H(+)(in). Its function is as follows. Na(+)/H(+) antiporter that extrudes sodium in exchange for external protons. The sequence is that of Na(+)/H(+) antiporter NhaA 2 from Acidiphilium cryptum (strain JF-5).